Consider the following 332-residue polypeptide: Glycerol-3-phosphate dehydrogenase [NAD(P)+] (332 aa).

Residues Trp-15, Arg-35, and Lys-108 each contribute to the NADPH site. 3 residues coordinate sn-glycerol 3-phosphate: Lys-108, Gly-137, and Ser-139. Residue Ala-141 participates in NADPH binding. Sn-glycerol 3-phosphate contacts are provided by Lys-192, Asp-245, Ser-255, Arg-256, and Asn-257. The active-site Proton acceptor is Lys-192. Arg-256 is an NADPH binding site. Positions 278 and 280 each coordinate NADPH.

It belongs to the NAD-dependent glycerol-3-phosphate dehydrogenase family.

It is found in the cytoplasm. It catalyses the reaction sn-glycerol 3-phosphate + NAD(+) = dihydroxyacetone phosphate + NADH + H(+). The catalysed reaction is sn-glycerol 3-phosphate + NADP(+) = dihydroxyacetone phosphate + NADPH + H(+). It functions in the pathway membrane lipid metabolism; glycerophospholipid metabolism. Functionally, catalyzes the reduction of the glycolytic intermediate dihydroxyacetone phosphate (DHAP) to sn-glycerol 3-phosphate (G3P), the key precursor for phospholipid synthesis. This chain is Glycerol-3-phosphate dehydrogenase [NAD(P)+], found in Methylobacterium radiotolerans (strain ATCC 27329 / DSM 1819 / JCM 2831 / NBRC 15690 / NCIMB 10815 / 0-1).